Reading from the N-terminus, the 343-residue chain is tRNA N6-adenosine threonylcarbamoyltransferase (343 aa).

Fe cation-binding residues include histidine 120 and histidine 124. Substrate-binding positions include 142–146, aspartate 175, glycine 188, aspartate 192, and asparagine 281; that span reads VVSGG. Aspartate 310 lines the Fe cation pocket.

This sequence belongs to the KAE1 / TsaD family. Requires Fe(2+) as cofactor.

The protein localises to the cytoplasm. It carries out the reaction L-threonylcarbamoyladenylate + adenosine(37) in tRNA = N(6)-L-threonylcarbamoyladenosine(37) in tRNA + AMP + H(+). Functionally, required for the formation of a threonylcarbamoyl group on adenosine at position 37 (t(6)A37) in tRNAs that read codons beginning with adenine. Is involved in the transfer of the threonylcarbamoyl moiety of threonylcarbamoyl-AMP (TC-AMP) to the N6 group of A37, together with TsaE and TsaB. TsaD likely plays a direct catalytic role in this reaction. The protein is tRNA N6-adenosine threonylcarbamoyltransferase of Bacillus thuringiensis subsp. konkukian (strain 97-27).